The chain runs to 477 residues: RTX-I toxin determinant D (477 aa).

Residues 1 to 59 (MKTWLMGLYEFFQAYKTVWTEIWKIRHQLDTPDREKDENEFLPAHLELIETPVSKKPRL) are Cytoplasmic-facing. Residues 60-80 (IAYLIMLFLFLALVISIVSHV) form a helical membrane-spanning segment. At 81-477 (EIVATATGKL…ESVSESLRER (397 aa)) the chain is on the periplasmic side.

The protein belongs to the membrane fusion protein (MFP) (TC 8.A.1) family.

It is found in the cell inner membrane. Its function is as follows. Involved in the transport of the toxin RTX-I as well as that of RTX-II. This is RTX-I toxin determinant D (apxID) from Actinobacillus pleuropneumoniae (Haemophilus pleuropneumoniae).